A 1325-amino-acid chain; its full sequence is Protein suppressor of sable (1325 aa).

Disordered regions lie at residues 1–36 and 74–326; these read MSVA…SKIQ and VCLQ…GGSN. Residues 9-30 are compositionally biased toward acidic residues; that stretch reads PLIDLEEDLEDGEIDDDEEDEQ. Residues 119–131 show a composition bias toward polar residues; it reads RSSNQDTSDQSLE. A highly charged region spans residues 138–327; it reads ATANPLLQST…GQEKMGGSNR (190 aa). Positions 149–158 are enriched in basic residues; it reads SSRRRKRKKE. The stretch at 149–179 forms a coiled coil; the sequence is SSRRRKRKKEREREQKKDKEQQNRSRRDEND. Over residues 159 to 178 the composition is skewed to basic and acidic residues; the sequence is REREQKKDKEQQNRSRRDEN. Residues 236–246 are compositionally biased toward gly residues; that stretch reads AGLGAGGGGGY. Residues 276–296 are a coiled coil; sequence NEKEHQRGVNNRKRRDRDRLE. 2 consecutive C3H1-type zinc fingers follow at residues 330 to 357 and 358 to 381; these read PRKL…HKEF and PCKY…HGEP. The stretch at 444–478 forms a coiled coil; the sequence is KRQDHQMQQQQQQLQHQQLQQQQEQQQTQQQAAAD. Basic and acidic residues predominate over residues 499 to 509; it reads KRKSRWTEKMG. 8 disordered regions span residues 499–535, 588–622, 639–695, 710–745, 780–835, 979–1058, 1143–1170, and 1295–1325; these read KRKS…LPPH, KAED…KSNG, FSGN…PSVF, SARQ…IGGG, AHSG…ALPP, DLET…GGSK, EPNG…GGGV, and RGGH…NRNI. S524 is modified (phosphoserine). Positions 594–606 are enriched in polar residues; the sequence is PQTQAELESSTPP. T604 is subject to Phosphothreonine. Residues 644 to 668 show a composition bias toward acidic residues; that stretch reads PLDDDRDDDEQLIIDDGNDSTAEED. At S663 the chain carries Phosphoserine. Position 664 is a phosphothreonine (T664). A compositionally biased stretch (polar residues) spans 710–726; the sequence is SARQLLPASATSPNQEN. The segment covering 790–800 has biased composition (low complexity); the sequence is SNENSNSNSHS. Residues 1003–1015 are compositionally biased toward pro residues; the sequence is SVPPPSMRVPPPN. Over residues 1021–1033 the composition is skewed to basic and acidic residues; sequence PTVRTDPRRDPRR. Residues 1042–1056 show a composition bias toward low complexity; it reads GASTANTTAPNASGG. Composition is skewed to gly residues over residues 1149–1170 and 1295–1309; these read AALG…GGGV and RGGH…GNGN.

It belongs to the suppressor of sable family. As to quaternary structure, interacts with Wdr82.

The protein localises to the nucleus. Its subcellular location is the chromosome. RNA-binding protein that suppresses transcription of some RNAs. Together with Wdr82, part of a transcription termination checkpoint that promotes transcription termination of RNAs and their subsequent degradation by the nuclear exosome. Promotes transcription termination of aberrant RNAs, transcripts from genes containing a transposon inserted at their very 5' end or RNAs from heat-shock-inducible repetitive element. Binds RNA preferentially at a sequence that resembles a cryptic 5'-splice site. This chain is Protein suppressor of sable, found in Drosophila melanogaster (Fruit fly).